The sequence spans 141 residues: S-adenosylmethionine decarboxylase proenzyme (141 aa).

The active-site Schiff-base intermediate with substrate; via pyruvic acid is the Ser-63. Residue Ser-63 is modified to Pyruvic acid (Ser); by autocatalysis. The active-site Proton acceptor; for processing activity is His-68. Cys-83 acts as the Proton donor; for catalytic activity in catalysis.

This sequence belongs to the prokaryotic AdoMetDC family. Type 1 subfamily. Heterotetramer of two alpha and two beta chains arranged as a dimer of alpha/beta heterodimers. The cofactor is pyruvate. Is synthesized initially as an inactive proenzyme. Formation of the active enzyme involves a self-maturation process in which the active site pyruvoyl group is generated from an internal serine residue via an autocatalytic post-translational modification. Two non-identical subunits are generated from the proenzyme in this reaction, and the pyruvate is formed at the N-terminus of the alpha chain, which is derived from the carboxyl end of the proenzyme. The post-translation cleavage follows an unusual pathway, termed non-hydrolytic serinolysis, in which the side chain hydroxyl group of the serine supplies its oxygen atom to form the C-terminus of the beta chain, while the remainder of the serine residue undergoes an oxidative deamination to produce ammonia and the pyruvoyl group blocking the N-terminus of the alpha chain.

It carries out the reaction S-adenosyl-L-methionine + H(+) = S-adenosyl 3-(methylsulfanyl)propylamine + CO2. It functions in the pathway amine and polyamine biosynthesis; S-adenosylmethioninamine biosynthesis; S-adenosylmethioninamine from S-adenosyl-L-methionine: step 1/1. Catalyzes the decarboxylation of S-adenosylmethionine to S-adenosylmethioninamine (dcAdoMet), the propylamine donor required for the synthesis of the polyamines spermine and spermidine from the diamine putrescine. The polypeptide is S-adenosylmethionine decarboxylase proenzyme (Thermococcus onnurineus (strain NA1)).